Reading from the N-terminus, the 148-residue chain is Deoxyuridine 5'-triphosphate nucleotidohydrolase (148 aa).

Substrate contacts are provided by residues 67–69, Asn80, 84–86, and Met94; these read RSG and LID.

The protein belongs to the dUTPase family. Mg(2+) is required as a cofactor.

The enzyme catalyses dUTP + H2O = dUMP + diphosphate + H(+). It functions in the pathway pyrimidine metabolism; dUMP biosynthesis; dUMP from dCTP (dUTP route): step 2/2. Its function is as follows. This enzyme is involved in nucleotide metabolism: it produces dUMP, the immediate precursor of thymidine nucleotides and it decreases the intracellular concentration of dUTP so that uracil cannot be incorporated into DNA. The protein is Deoxyuridine 5'-triphosphate nucleotidohydrolase of Burkholderia ambifaria (strain ATCC BAA-244 / DSM 16087 / CCUG 44356 / LMG 19182 / AMMD) (Burkholderia cepacia (strain AMMD)).